The primary structure comprises 151 residues: KGKGGHNLYHVKGMVYCDTCRIQFITRVSTMMEGATVSLQCRNLTAGTETFKAEAVTDKLGMYTIKVDGDHEDDICQIVLVKSPGQECSEIPNDVYSEQAAKVTLTSNNGEASDVRNANALGFLKKAPLPECPEVLKELDMYDVPGSVTQN.

3 cysteine pairs are disulfide-bonded: C17–C88, C20–C132, and C41–C76. A glycan (N-linked (GlcNAc...) asparagine) is linked at N43.

This sequence belongs to the Ole e I family. Post-translationally, N-glycosylated. Contains fucose monosaccharides in the glycan structure. Expressed in pollen (at protein level).

The protein resides in the secreted. In Kali turgidum (Prickly saltwort), this protein is Pollen allergen Sal k 5.0101.